A 20-amino-acid chain; its full sequence is Hemocyanin subunit II (20 aa).

The interval Asp1 to Lys20 is disordered. Over residues Lys10–Lys20 the composition is skewed to basic and acidic residues.

This sequence belongs to the tyrosinase family. Hemocyanin subfamily. In terms of assembly, composed of 3 major subunits (IB, II and III) and 1 minor subunit (IA) which form homohexamers and heterohexamers. May also form larger structures. As to expression, hemolymph.

Its subcellular location is the secreted. It localises to the extracellular space. Functionally, hemocyanins are copper-containing oxygen carriers occurring freely dissolved in the hemolymph of many mollusks and arthropods. The sequence is that of Hemocyanin subunit II from Panulirus japonicus (Japanese spiny lobster).